A 139-amino-acid polypeptide reads, in one-letter code: Growth factor (139 aa).

A signal peptide spans 1-19 (MSMKYLMLLFATMIIRSFA). N-linked (GlcNAc...) asparagine; by host glycosylation occurs at asparagine 34. Positions 41 to 81 (AIRLCGPEGDGYCLHGDCIHARDINGMYCRCSHGYTGIRCQ) constitute an EGF-like domain. Disulfide bonds link cysteine 45-cysteine 58, cysteine 53-cysteine 69, and cysteine 71-cysteine 80. Asparagine 95 is a glycosylation site (N-linked (GlcNAc...) asparagine; by host).

It belongs to the orthopoxvirus OPG019 family.

The protein localises to the secreted. Functionally, stimulates cellular proliferation (hyperplasia)and mobility around infected cells to promote rapid and efficient spread of infection. This Camelus protein is Growth factor (OPG019).